Consider the following 442-residue polypeptide: MATSVSTIGAVNKTPLSLNNSVAGTSVPSTAFFGKTLKKVYGKGVSSPKVTNKSLRIVAEQIDVDPKKQTDSDRWKGLVQDFSDDQQDITRGKGMVDSLFQAPTGTGTHHAVLQSYEYVSQGLRQYNLDNKLDGFYIAPAFMDKLVVHITKNFLKLPNIKVPLILGIWGGKGQGKSFQCELVFRKMGINPIMMSAGELESGNAGEPAKLIRQRYREAAEIIRKGNMCCLFINDLDAGAGRMGGTTQYTVNNQMVNATLMNIADNPTNVQLPGMYNKQENARVPIIVTGNDFSTLYAPLIRDGRMEKFYWAPTREDRIGVCTGIFRTDNVPAEDVVKIVDNFPGQSIDFFGALRARVYDDEVRKWVSGTGIEKIGDKLLNSFDGPPTFEQPKMTIEKLLEYGNMLVQEQENVKRVQLADKYLKEAALGDANADAINNGSFFAS.

A chloroplast-targeting transit peptide spans 1–58; the sequence is MATSVSTIGAVNKTPLSLNNSVAGTSVPSTAFFGKTLKKVYGKGVSSPKVTNKSLRIV. An ATP-binding site is contributed by 169-176; that stretch reads GGKGQGKS.

Belongs to the RuBisCO activase family.

It localises to the plastid. The protein localises to the chloroplast stroma. In terms of biological role, activation of RuBisCO (ribulose-1,5-bisphosphate carboxylase/oxygenase; EC 4.1.1.39) involves the ATP-dependent carboxylation of the epsilon-amino group of lysine leading to a carbamate structure. The protein is Ribulose bisphosphate carboxylase/oxygenase activase 1, chloroplastic of Nicotiana tabacum (Common tobacco).